We begin with the raw amino-acid sequence, 558 residues long: Putative transport protein VC0395_A0715/VC395_1212 (558 aa).

A run of 5 helical transmembrane segments spans residues 5 to 25 (VVLL…AIGL), 37 to 57 (LGNS…GFSF), 66 to 86 (FMLF…GIFF), 92 to 112 (YLIL…FGGY), and 164 to 184 (VGYA…AKLL). RCK C-terminal domains are found at residues 203–290 (RGLG…FRNG) and 291–374 (KEVF…KIGF). 6 helical membrane passes run 384-404 (LLAF…TMTF), 407-427 (VSFS…LGFL), 441-461 (ALNM…GLNA), 476-496 (VIGL…LVGA), 504-524 (ALLF…DVVN), and 537-557 (AGTY…FILL).

The protein belongs to the AAE transporter (TC 2.A.81) family. YbjL subfamily.

The protein localises to the cell membrane. The chain is Putative transport protein VC0395_A0715/VC395_1212 from Vibrio cholerae serotype O1 (strain ATCC 39541 / Classical Ogawa 395 / O395).